The following is a 240-amino-acid chain: Urease accessory protein UreF (240 aa).

This sequence belongs to the UreF family. UreD, UreF and UreG form a complex that acts as a GTP-hydrolysis-dependent molecular chaperone, activating the urease apoprotein by helping to assemble the nickel containing metallocenter of UreC. The UreE protein probably delivers the nickel.

The protein localises to the cytoplasm. Its function is as follows. Required for maturation of urease via the functional incorporation of the urease nickel metallocenter. The protein is Urease accessory protein UreF of Bradyrhizobium sp. (strain ORS 278).